The primary structure comprises 450 residues: Glucose-6-phosphate isomerase (450 aa).

Thr-39 carries the post-translational modification Phosphothreonine. Glu-291 (proton donor) is an active-site residue. Residues His-312 and Lys-426 contribute to the active site.

Belongs to the GPI family.

It localises to the cytoplasm. The catalysed reaction is alpha-D-glucose 6-phosphate = beta-D-fructose 6-phosphate. Its pathway is carbohydrate biosynthesis; gluconeogenesis. It participates in carbohydrate degradation; glycolysis; D-glyceraldehyde 3-phosphate and glycerone phosphate from D-glucose: step 2/4. Functionally, catalyzes the reversible isomerization of glucose-6-phosphate to fructose-6-phosphate. In Halalkalibacterium halodurans (strain ATCC BAA-125 / DSM 18197 / FERM 7344 / JCM 9153 / C-125) (Bacillus halodurans), this protein is Glucose-6-phosphate isomerase.